The sequence spans 508 residues: Drug efflux pump JefA (508 aa).

14 consecutive transmembrane segments (helical) span residues 9–29 (VLAT…VNVA), 46–66 (WAVA…ALLG), 75–95 (FVFG…PVSL), 104–124 (IQGL…SHSF), 136–156 (NWMA…GLMV), 163–183 (SVFL…LVGV), 194–214 (LDWV…YTII), 222–242 (QSAG…WLFV), 265–285 (SVLI…MVIT), 297–317 (LHAG…SLLA), 328–348 (LPVL…AISM), 354–374 (VALV…TPLL), 399–419 (LGGI…LGAA), and 479–499 (GIKL…VLGW).

This sequence belongs to the major facilitator superfamily.

It localises to the cell inner membrane. Its function is as follows. Involved in resistance to ethambutol and isoniazid. This Mycobacterium tuberculosis (strain CDC 1551 / Oshkosh) protein is Drug efflux pump JefA.